Consider the following 1382-residue polypeptide: Hepatocyte growth factor receptor (1382 aa).

An N-terminal signal peptide occupies residues 1–24; sequence MKASAVLAPGILALLFTLVQGSDG. Residues 25-935 lie on the Extracellular side of the membrane; that stretch reads ECHEALAKSE…VQPDQNFTGL (911 aa). Positions 27-516 constitute a Sema domain; sequence HEALAKSEMN…TGKRITKIPL (490 aa). N-linked (GlcNAc...) asparagine glycosylation is found at Asn45, Asn100, and Asn106. Disulfide bonds link Cys95-Cys101, Cys98-Cys160, Cys133-Cys141, and Cys173-Cys176. 2 N-linked (GlcNAc...) asparagine glycosylation sites follow: Asn203 and Asn359. Intrachain disulfides connect Cys299–Cys364 and Cys386–Cys398. N-linked (GlcNAc...) asparagine glycosylation is found at Asn400 and Asn406. Cystine bridges form between Cys521–Cys539, Cys527–Cys562, Cys530–Cys546, and Cys542–Cys552. IPT/TIG domains lie at 564–656, 658–740, and 743–837; these read PAIH…FSYV, PVIT…FSYQ, and PVVY…LIYV. O-linked (Man) threonine glycosylation is present at Thr583. N-linked (GlcNAc...) asparagine glycosylation is found at Asn608 and Asn636. Residues Thr677 and Thr762 are each glycosylated (O-linked (Man) threonine). N-linked (GlcNAc...) asparagine glycans are attached at residues Asn786, Asn880, and Asn931. A helical membrane pass occupies residues 936–956; the sequence is IVGVVSISIILLLLLGLFLWM. The Cytoplasmic segment spans residues 957-1382; it reads KKRKQIKDLG…QDNINGEVDT (426 aa). Residue Ser967 is modified to Phosphoserine. Thr978 bears the Phosphothreonine mark. Phosphoserine occurs at positions 991, 998, and 1001. Tyr1004 is modified (phosphotyrosine). In terms of domain architecture, Protein kinase spans 1079 to 1346; the sequence is VHFNEVIGRG…RISAIFSTFI (268 aa). ATP is bound by residues 1085–1093 and Lys1111; that span reads IGRGHFGCV. Residue Asp1205 is the Proton acceptor of the active site. Positions 1213–1382 are interaction with RANBP9; it reads LDEKFTVKVA…QDNINGEVDT (170 aa). Tyr1231 carries the phosphotyrosine modification. A phosphotyrosine; by autocatalysis mark is found at Tyr1235 and Tyr1236. Thr1290 bears the Phosphothreonine mark. Positions 1321–1360 are interaction with MUC20; the sequence is WHPKAEMRPSFSELVSRISAIFSTFIGEHYVHVNATYVNV. Phosphotyrosine; by autocatalysis occurs at positions 1350 and 1357. Tyr1366 is modified (phosphotyrosine).

This sequence belongs to the protein kinase superfamily. Tyr protein kinase family. Heterodimer made of an alpha chain (50 kDa) and a beta chain (145 kDa) which are disulfide linked. Binds PLXNB1. Interacts when phosphorylated with downstream effectors including STAT3, PIK3R1, SRC, PCLG1, GRB2 and GAB1. Interacts with SPSB1, SPSB2 and SPSB4. Interacts with INPP5D/SHIP1. When phosphorylated at Tyr-1357, interacts with INPPL1/SHIP2. Interacts with RANBP9 and RANBP10, as well as SPSB1, SPSB2, SPSB3 and SPSB4. SPSB1 binding occurs in the presence and in the absence of HGF, however HGF treatment has a positive effect on this interaction. Interacts with MUC20; prevents interaction with GRB2 and suppresses hepatocyte growth factor-induced cell proliferation. Interacts with GRB10. Interacts with PTPN1 and PTPN2. Interacts with HSP90AA1 and HSP90AB1; the interaction suppresses MET kinase activity. Interacts with tensin TNS3. Interacts (when phosphorylated) with tensin TNS4 (via SH2 domain); the interaction increases MET protein stability by inhibiting MET endocytosis and subsequent lysosomal degradation. Autophosphorylated in response to ligand binding on Tyr-1235 and Tyr-1236 in the kinase domain leading to further phosphorylation of Tyr-1350 and Tyr-1357 in the C-terminal multifunctional docking site. Dephosphorylated by PTPRJ at Tyr-1350 and Tyr-1366. Dephosphorylated by PTPN1 and PTPN2. Post-translationally, ubiquitinated. Ubiquitination by CBL regulates the receptor stability and activity through proteasomal degradation. In terms of processing, O-mannosylation of IPT/TIG domains by TMEM260 is required for protein maturation. O-mannosylated residues are composed of single mannose glycans that are not elongated or modified.

Its subcellular location is the membrane. The enzyme catalyses L-tyrosyl-[protein] + ATP = O-phospho-L-tyrosyl-[protein] + ADP + H(+). With respect to regulation, in its inactive state, the C-terminal tail interacts with the catalytic domain and inhibits the kinase activity. Upon ligand binding, the C-terminal tail is displaced and becomes phosphorylated, thus increasing the kinase activity. Functionally, receptor tyrosine kinase that transduces signals from the extracellular matrix into the cytoplasm by binding to hepatocyte growth factor/HGF ligand. Regulates many physiological processes including proliferation, scattering, morphogenesis and survival. Ligand binding at the cell surface induces autophosphorylation of MET on its intracellular domain that provides docking sites for downstream signaling molecules. Following activation by ligand, interacts with the PI3-kinase subunit PIK3R1, PLCG1, SRC, GRB2, STAT3 or the adapter GAB1. Recruitment of these downstream effectors by MET leads to the activation of several signaling cascades including the RAS-ERK, PI3 kinase-AKT, or PLCgamma-PKC. The RAS-ERK activation is associated with the morphogenetic effects while PI3K/AKT coordinates prosurvival effects. During embryonic development, MET signaling plays a role in gastrulation, development and migration of muscles and neuronal precursors, angiogenesis and kidney formation. In adults, participates in wound healing as well as organ regeneration and tissue remodeling. Also promotes differentiation and proliferation of hematopoietic cells. The protein is Hepatocyte growth factor receptor (MET) of Microcebus murinus (Gray mouse lemur).